The following is a 117-amino-acid chain: MSRDNQEIKAPEESSAEEQKEMDDKVTSPEKAEEIKLKSRYPNIGPKPGGSDFLRKRLQKGQKYFDSGDYNMAKAKMKNKQLPTAAPDKTEVTGDHIPTPQDLPQRKPSLVASKLAG.

Over residues Met1–Leu37 the composition is skewed to basic and acidic residues. A disordered region spans residues Met1–Leu54. Ser28 is subject to Phosphoserine; by CDK2. At Ser67 the chain carries Phosphoserine; by GWL. Positions Met77 to Gly117 are disordered. Thr99 carries the phosphothreonine; by CDK2 modification. The residue at position 109 (Ser109) is a Phosphoserine; by PKA.

The protein belongs to the endosulfine family. In terms of assembly, interacts (when phosphorylated at Ser-67) with ppp2r2d. In terms of processing, phosphorylation at Ser-67 by gwl during mitosis is essential for interaction with ppp2r2d (PR55-delta) and subsequent inactivation of PP2A.

It is found in the cytoplasm. Its function is as follows. Protein phosphatase inhibitor that specifically inhibits protein phosphatase 2A (PP2A) during mitosis. When phosphorylated at Ser-67 during mitosis, specifically interacts with ppp2r2d (PR55-delta) and inhibits its activity, leading to inactivation of PP2A, an essential condition to keep cyclin-B1-CDK1 activity high during M phase. This Xenopus laevis (African clawed frog) protein is cAMP-regulated phosphoprotein 19-B (arpp19-b).